Here is a 489-residue protein sequence, read N- to C-terminus: MTPIVTVLICLRLSLGPRTHVQAGTLPKPTLWAEPGSVITQGSPVTLWCQGILETQEYRLYREKKTAPWITRIPQEIVKKGQFPIPSITWEHTGRYRCFYGSHTAGWSEPSDPLELVVTGAYIKPTLSALPSPVVTSGGNVTLHCVSQVAFGSFILCKEGEDEHPQCLNSQPRTHGWSRAIFSVGPVSPSRRWSYRCYAYDSNSPHVWSLPSDLLELLVLGVSKKPSLSVQPGPIVAPGESLTLQCVSDVSYDRFVLYKEGERDFLQLPGPQPQAGLSQANFTLGPVSRSYGGQYRCSGAYNLSSEWSAPSDPLDILIAGQFRGRPFISVHPGPTVASGENVTLLCQSWGPFHTFLLTKAGAADAPLRLRSIHEYPKYQAEFPMSPVTSAHSGTYRCYGSLSSNPYLLSHPSDSLELMVSGAAETLSPPQNKSDSKAGAANTLSPSQNKTASHPQDYTVENLIRMGIAGLVLVVLGILLFEAQHSQRSL.

The N-terminal stretch at 1–16 is a signal peptide; sequence MTPIVTVLICLRLSLG. Residues 17 to 461 lie on the Extracellular side of the membrane; sequence PRTHVQAGTL…SHPQDYTVEN (445 aa). Ig-like C2-type domains lie at 27-116, 119-224, 226-315, and 326-415; these read PKPT…PLEL, TGAY…GVSK, PSLS…DPLD, and PFIS…SDSL. Residues Cys-49 and Cys-98 are joined by a disulfide bond. A glycan (N-linked (GlcNAc...) asparagine) is linked at Asn-140. Cystine bridges form between Cys-145–Cys-197, Cys-157–Cys-167, and Cys-246–Cys-297. N-linked (GlcNAc...) asparagine glycans are attached at residues Asn-281, Asn-302, and Asn-341. An intrachain disulfide couples Cys-346 to Cys-397. Residues 425-453 form a disordered region; sequence TLSPPQNKSDSKAGAANTLSPSQNKTASH. 2 N-linked (GlcNAc...) asparagine glycosylation sites follow: Asn-431 and Asn-448. The span at 441-453 shows a compositional bias: polar residues; it reads NTLSPSQNKTASH. The helical transmembrane segment at 462–482 threads the bilayer; that stretch reads LIRMGIAGLVLVVLGILLFEA. Topologically, residues 483-489 are cytoplasmic; that stretch reads QHSQRSL.

In terms of tissue distribution, detected in monocytes and B-cells.

Its subcellular location is the membrane. Functionally, may act as receptor for class I MHC antigens. This Homo sapiens (Human) protein is Leukocyte immunoglobulin-like receptor subfamily A member 1 (LILRA1).